Consider the following 615-residue polypeptide: DNA mismatch repair protein MutL (615 aa).

The segment at 363 to 397 (FAEPAAREPVAPRYTPAPASGSRPAAPWPNAQPGY) is disordered. Over residues 364–391 (AEPAAREPVAPRYTPAPASGSRPAAPWP) the composition is skewed to low complexity.

This sequence belongs to the DNA mismatch repair MutL/HexB family.

Its function is as follows. This protein is involved in the repair of mismatches in DNA. It is required for dam-dependent methyl-directed DNA mismatch repair. May act as a 'molecular matchmaker', a protein that promotes the formation of a stable complex between two or more DNA-binding proteins in an ATP-dependent manner without itself being part of a final effector complex. The polypeptide is DNA mismatch repair protein MutL (Escherichia coli O8 (strain IAI1)).